The chain runs to 558 residues: MAELRSNMITQGIDRAPHRSLLRAAGVKEEDFGKPFIAVCNSYIDIVPGHVHLQEFGKIVKEAIREAGGVPFEFNTIGVDDGIAMGHIGMRYSLPSREIIADSVETVVSAHWFDGMVCIPNCDKITPGMLMAAMRINIPTIFVSGGPMAAGRTSDGRKISLSSVFEGVGAYQAGKINENELQELEQFGCPTCGSCSGMFTANSMNCLSEALGLALPGNGTILATSPERKEFVRKSAAQLMETIRKDIKPRDIVTVKAIDNAFALDMALGGSTNTVLHTLALANEAGVEYSLERINEVAERVPHLAKLAPASDVFIEDLHEAGGVSAALNELSKKEGALHLDALTVTGKTLGETIAGHEVKDYDVIHPLDQPFTEKGGLAVLFGNLAPDGAIIKTGGVQNGITRHEGPAVVFDSQDEALDGIINRKVKEGDVVIIRYEGPKGGPGMPEMLAPTSQIVGMGLGPKVALITDGRFSGASRGLSIGHVSPEAAEGGPLAFVENGDHIIVDIEKRILDVQVPEEEWEKRKANWKGFEPKVKTGYLARYSKLVTSANTGGIMKI.

Residue aspartate 81 participates in Mg(2+) binding. Cysteine 122 is a [2Fe-2S] cluster binding site. Residues aspartate 123 and lysine 124 each contribute to the Mg(2+) site. Lysine 124 is modified (N6-carboxylysine). A [2Fe-2S] cluster-binding site is contributed by cysteine 195. Residue glutamate 447 participates in Mg(2+) binding. Serine 473 acts as the Proton acceptor in catalysis.

It belongs to the IlvD/Edd family. As to quaternary structure, homodimer. [2Fe-2S] cluster is required as a cofactor. Mg(2+) serves as cofactor.

The catalysed reaction is (2R)-2,3-dihydroxy-3-methylbutanoate = 3-methyl-2-oxobutanoate + H2O. The enzyme catalyses (2R,3R)-2,3-dihydroxy-3-methylpentanoate = (S)-3-methyl-2-oxopentanoate + H2O. It participates in amino-acid biosynthesis; L-isoleucine biosynthesis; L-isoleucine from 2-oxobutanoate: step 3/4. Its pathway is amino-acid biosynthesis; L-valine biosynthesis; L-valine from pyruvate: step 3/4. Functionally, functions in the biosynthesis of branched-chain amino acids. Catalyzes the dehydration of (2R,3R)-2,3-dihydroxy-3-methylpentanoate (2,3-dihydroxy-3-methylvalerate) into 2-oxo-3-methylpentanoate (2-oxo-3-methylvalerate) and of (2R)-2,3-dihydroxy-3-methylbutanoate (2,3-dihydroxyisovalerate) into 2-oxo-3-methylbutanoate (2-oxoisovalerate), the penultimate precursor to L-isoleucine and L-valine, respectively. This is Dihydroxy-acid dehydratase from Bacillus subtilis (strain 168).